The chain runs to 340 residues: Phosphate acyltransferase (340 aa).

This sequence belongs to the PlsX family. As to quaternary structure, homodimer. Probably interacts with PlsY.

The protein resides in the cytoplasm. It carries out the reaction a fatty acyl-[ACP] + phosphate = an acyl phosphate + holo-[ACP]. The protein operates within lipid metabolism; phospholipid metabolism. Catalyzes the reversible formation of acyl-phosphate (acyl-PO(4)) from acyl-[acyl-carrier-protein] (acyl-ACP). This enzyme utilizes acyl-ACP as fatty acyl donor, but not acyl-CoA. The polypeptide is Phosphate acyltransferase (Trichodesmium erythraeum (strain IMS101)).